The following is a 354-amino-acid chain: Protein OPG055 (354 aa).

The protein belongs to the orthopoxvirus OPG055 family.

Stimulates increases in peripheral microtubule dynamics and may increase the motility of the infected cells, contributing to cell-to-cell spread of the virus. Seems to inhibit the signaling via the GTPase RHOA and DIAPH1/mDia. In Homo sapiens (Human), this protein is Protein OPG055 (OPG055).